Reading from the N-terminus, the 173-residue chain is Adenine phosphoribosyltransferase (173 aa).

Belongs to the purine/pyrimidine phosphoribosyltransferase family. In terms of assembly, homodimer.

The protein resides in the cytoplasm. It catalyses the reaction AMP + diphosphate = 5-phospho-alpha-D-ribose 1-diphosphate + adenine. It functions in the pathway purine metabolism; AMP biosynthesis via salvage pathway; AMP from adenine: step 1/1. In terms of biological role, catalyzes a salvage reaction resulting in the formation of AMP, that is energically less costly than de novo synthesis. This chain is Adenine phosphoribosyltransferase, found in Solibacter usitatus (strain Ellin6076).